A 157-amino-acid polypeptide reads, in one-letter code: Probable succinate transporter subunit YjjB (157 aa).

A run of 4 helical transmembrane segments spans residues 8–28, 55–75, 87–107, and 129–149; these read LALM…AMVF, AGFN…SIGI, VFTV…TAMI, and FLKA…PGLW.

It belongs to the ThrE exporter (TC 2.A.79) family. The transporter is composed of YjjB and YjjP.

The protein resides in the cell inner membrane. In terms of biological role, involved in succinate export with YjjP. Both proteins are required for export. The protein is Probable succinate transporter subunit YjjB of Salmonella agona (strain SL483).